The primary structure comprises 347 residues: Sulfate/thiosulfate import ATP-binding protein CysA 1 (347 aa).

The ABC transporter domain occupies 3–237 (VRVESLRKEF…PVSPFVYGFI (235 aa)). Position 35–42 (35–42 (GPSGSGKT)) interacts with ATP.

The protein belongs to the ABC transporter superfamily. Sulfate/tungstate importer (TC 3.A.1.6) family. In terms of assembly, the complex is composed of two ATP-binding proteins (CysA), two transmembrane proteins (CysT and CysW) and a solute-binding protein (CysP).

It localises to the cell inner membrane. It carries out the reaction sulfate(out) + ATP + H2O = sulfate(in) + ADP + phosphate + H(+). The enzyme catalyses thiosulfate(out) + ATP + H2O = thiosulfate(in) + ADP + phosphate + H(+). Functionally, part of the ABC transporter complex CysAWTP involved in sulfate/thiosulfate import. Responsible for energy coupling to the transport system. This chain is Sulfate/thiosulfate import ATP-binding protein CysA 1, found in Rhizobium meliloti (strain 1021) (Ensifer meliloti).